A 1045-amino-acid chain; its full sequence is MGEIEQRPTPGSRLGAPENSGISTLERGQKPPPTPSGKLVSIKIQMLDDTQEAFEVPQRAPGKVLLDAVCNHLNLVEGDYFGLECPDHKKITVWLDLLKPLVKQIRRPKHVVVKFVVKFFPPDHTQLQEELTRYLFALQVKQDLAQGRLTCNDTSAALLISHIVQSEIGDFDEALDREHLAKNKYIPQQDALEDKIVEFHHNHIGQTPAESDFQLLEIARRLEMYGIRLHPAKDREGTKINLAVANTGILVFQGFTKINAFNWAKVRKLSFKRKRFLIKLRPDANSAYQDTLEFLMASRDFCKSFWKICVEHHAFFRLFEEPKPKPKPVLFSRGSSFRFSGRTQKQVLDYVKEGGHKKVQFERKHSKIHSIRSLASQPTELYSEVLEQSQQSASLTFGEGAESPGGQSCQQGKEPKVSPGEPGSHPSPVPRRSPAGNKQADGAASAPTEEEEEVVKDRTQQSKPQPPQPSTGSLTGSPHLSELSVNSQGGVAPANVTLSPNLSPDTKQASPLISPLLNDQACPRTDDEDEGRRKRFPTDKAYFIAKEVSTTERTYLKDLEVITSWFQSAVSKEDAMPEALKSLIFPNFEPLHKFHTNFLKEIEQRLALWEGRSNAQIRDYQRIGDVMLKNIQGMKHLAVHLWKHSEALEALENGIKSSRRLENFCRDFELQKVCYLPLNTFLLRPLHRHMHYKQVLERLCKHHPPSHADFRDCRAALAGITEMVAQLHGTMIKMENFQKLHELKKDLIGIDNLVVPGREFIRLGSLSKLSGKGLQQRMFFLFNDVLLYTSRGLTASNQFKVHGQLPLYGMTIKESEDEWGVPHCLTLRGQRQSIIVAASSRSEMEKWVEDIQMAIDLAEKNSSLAPEFLASSPPDNKSPDEATAADQESEDDLSASRTSLERQAPHRGNTMVHVCWHRNTSVSMVDFSVAVENQLSGNLLRKFKNSNGWQKLWVVFTNFCLFFYKSHQDNHPLASLPLLGYSLTIPTESENIHKDYVFKLHFKSHVYYFRAESEYTFERWMEVIRSATSSASRVHVSSHKESLVY.

A disordered region spans residues 1–37; it reads MGEIEQRPTPGSRLGAPENSGISTLERGQKPPPTPSG. Ser-20 and Ser-23 each carry phosphoserine. Thr-24 bears the Phosphothreonine mark. One can recognise an FERM domain in the interval 40 to 320; it reads VSIKIQMLDD…EHHAFFRLFE (281 aa). A phosphoserine mark is found at Ser-340, Ser-373, Ser-389, Ser-403, Ser-418, Ser-427, and Ser-433. The tract at residues 392-534 is disordered; that stretch reads SASLTFGEGA…TDDEDEGRRK (143 aa). Composition is skewed to polar residues over residues 471 to 489 and 496 to 511; these read TGSL…NSQG and VTLS…QASP. Residues Ser-510 and Ser-514 each carry the phosphoserine modification. Residues 540 to 730 enclose the DH domain; that stretch reads KAYFIAKEVS…TEMVAQLHGT (191 aa). In terms of domain architecture, PH 1 spans 759–856; sequence EFIRLGSLSK…WVEDIQMAID (98 aa). A phosphoserine mark is found at Ser-833, Ser-872, and Ser-878. Residues 866 to 902 are disordered; sequence PEFLASSPPDNKSPDEATAADQESEDDLSASRTSLER. The residue at position 883 (Thr-883) is a Phosphothreonine. Phosphoserine is present on residues Ser-889, Ser-896, and Ser-899. A PH 2 domain is found at 932–1029; the sequence is ENQLSGNLLR…WMEVIRSATS (98 aa).

In terms of assembly, interacts with CADM1. Interacts with RAC1.

It is found in the cell membrane. Its subcellular location is the synapse. The protein resides in the synaptosome. It localises to the cytoplasm. The protein localises to the cytosol. It is found in the cell projection. Its subcellular location is the filopodium. The protein resides in the dendrite. It localises to the dendritic spine. Functions as a guanine nucleotide exchange factor for RAC1. May play a role in semaphorin signaling. Plays a role in the assembly and disassembly of dendritic filopodia, the formation of dendritic spines, regulation of dendrite length and ultimately the formation of synapses. The chain is FERM, ARHGEF and pleckstrin domain-containing protein 1 (FARP1) from Pongo abelii (Sumatran orangutan).